A 406-amino-acid chain; its full sequence is Fructose-1,6-bisphosphatase, chloroplastic (406 aa).

The transit peptide at 1–47 (MAAAATTSSHLLLLSRQQAAASLQCGLSFRRQPGRLAGGSSAPSVRC) directs the protein to the chloroplast. Mg(2+)-binding residues include Glu-128, Glu-157, Asp-178, Leu-180, and Asp-181. 181-184 (DGSS) lines the substrate pocket. Cys-222 and Cys-227 are oxidised to a cystine. Residues Asn-286, Tyr-318, Tyr-336, Tyr-338, and Lys-348 each coordinate substrate. Glu-354 lines the Mg(2+) pocket.

It belongs to the FBPase class 1 family. In terms of assembly, homotetramer. The cofactor is Mg(2+).

The protein resides in the plastid. It localises to the chloroplast stroma. It catalyses the reaction beta-D-fructose 1,6-bisphosphate + H2O = beta-D-fructose 6-phosphate + phosphate. It functions in the pathway carbohydrate biosynthesis; Calvin cycle. With respect to regulation, inhibited by sodium chloride. Its function is as follows. Catalyzes the irreversible reaction from fructose-1,6-bisphosphate to fructose-6-phosphate and inorganic phosphate, to regenerate the primary CO(2) acceptor molecule, ribulose-1,5-bisphosphate. Involved in the regulation of photosynthetic performance and sucrose synthesis. The protein is Fructose-1,6-bisphosphatase, chloroplastic of Oryza sativa subsp. indica (Rice).